Here is a 190-residue protein sequence, read N- to C-terminus: Large ribosomal subunit protein uL10 (190 aa).

The interval 170 to 190 (AAGAPAEAAPVEAPAAETVDA) is disordered.

The protein belongs to the universal ribosomal protein uL10 family. Part of the ribosomal stalk of the 50S ribosomal subunit. The N-terminus interacts with L11 and the large rRNA to form the base of the stalk. The C-terminus forms an elongated spine to which L12 dimers bind in a sequential fashion forming a multimeric L10(L12)X complex.

Its function is as follows. Forms part of the ribosomal stalk, playing a central role in the interaction of the ribosome with GTP-bound translation factors. This chain is Large ribosomal subunit protein uL10, found in Kineococcus radiotolerans (strain ATCC BAA-149 / DSM 14245 / SRS30216).